Consider the following 684-residue polypeptide: ATP-dependent zinc metalloprotease FtsH (684 aa).

Over 1–21 (MENKNDMFNKTPKSGKPKMFR) the chain is Cytoplasmic. Residues 22–42 (FNLYWMYGLIFIMLVALYMTN) form a helical membrane-spanning segment. The Periplasmic portion of the chain corresponds to 43 to 138 (DSSGTKELGW…QVRFEEGDDA (96 aa)). Residues 139 to 159 (IWNFLVSFGPIILLIGVWMFL) traverse the membrane as a helical segment. Residues 160-684 (MRRMSGGTGA…TEENKTGKIA (525 aa)) lie on the Cytoplasmic side of the membrane. 236–243 (GPPGTGKT) lines the ATP pocket. Position 459 (His459) interacts with Zn(2+). Residue Glu460 is part of the active site. Zn(2+) contacts are provided by His463 and Asp534. Basic and acidic residues predominate over residues 647 to 662 (EKANGKNKENADKEAE). Residues 647-684 (EKANGKNKENADKEAEADATTENVTDTPTEENKTGKIA) form a disordered region.

This sequence in the central section; belongs to the AAA ATPase family. In the C-terminal section; belongs to the peptidase M41 family. In terms of assembly, homohexamer. The cofactor is Zn(2+).

Its subcellular location is the cell inner membrane. Its function is as follows. Acts as a processive, ATP-dependent zinc metallopeptidase for both cytoplasmic and membrane proteins. Plays a role in the quality control of integral membrane proteins. The polypeptide is ATP-dependent zinc metalloprotease FtsH (Parabacteroides distasonis (strain ATCC 8503 / DSM 20701 / CIP 104284 / JCM 5825 / NCTC 11152)).